A 309-amino-acid chain; its full sequence is Aspartate carbamoyltransferase catalytic subunit (309 aa).

Residues R55 and T56 each contribute to the carbamoyl phosphate site. K85 contributes to the L-aspartate binding site. The carbamoyl phosphate site is built by R106, H135, and Q138. The L-aspartate site is built by R168 and R230. The carbamoyl phosphate site is built by L268 and P269.

It belongs to the aspartate/ornithine carbamoyltransferase superfamily. ATCase family. As to quaternary structure, heterododecamer (2C3:3R2) of six catalytic PyrB chains organized as two trimers (C3), and six regulatory PyrI chains organized as three dimers (R2).

It catalyses the reaction carbamoyl phosphate + L-aspartate = N-carbamoyl-L-aspartate + phosphate + H(+). The protein operates within pyrimidine metabolism; UMP biosynthesis via de novo pathway; (S)-dihydroorotate from bicarbonate: step 2/3. Catalyzes the condensation of carbamoyl phosphate and aspartate to form carbamoyl aspartate and inorganic phosphate, the committed step in the de novo pyrimidine nucleotide biosynthesis pathway. The polypeptide is Aspartate carbamoyltransferase catalytic subunit (Vibrio vulnificus (strain YJ016)).